Reading from the N-terminus, the 201-residue chain is Ras-related protein Rab-9A (201 aa).

At A2 the chain carries N-acetylalanine. G17 is a GDP binding site. Residues G17, V18, G19, K20, S21, S22, T34, H38, and T39 each contribute to the GTP site. Residues G19, K20, S21, and S22 each coordinate GDP. S21 contributes to the Mg(2+) binding site. A Switch 1 motif is present at residues 31–42; it reads KFDTQLFHTIGV. Residues T39 and D62 each coordinate Mg(2+). A Switch 2 motif is present at residues 64-78; it reads AGQERFRSLRTPFYR. GTP contacts are provided by G65, N124, K125, D127, A155, and K156. Positions 124, 125, 127, 155, and 156 each coordinate GDP. At S179 the chain carries Phosphoserine. T187 bears the Phosphothreonine mark. Residues C200 and C201 are each lipidated (S-geranylgeranyl cysteine).

It belongs to the small GTPase superfamily. Rab family. Interacts (preferentially in its GTP-bound form) with GCC2 (via its GRIP domain). Interacts (GTP-bound form) with SGSM1; the GDP-bound form has much lower affinity for SGSM1. Interacts with SGSM2. The GTP-bound form but not the GDP-bound form interacts with HPS4 and BLOC-3 complex (heterodimer of HPS1 and HPS4) but does not interact with HPS1 alone. Interacts (GTP-bound form) with NDE1; two RAB9A-GTP molecules lie on the opposite sides of the NDE1 homodimer; the interaction leads to RAB9A-dynein motor tethering. Interacts (GTP-bound form) with NDEL1. Requires Mg(2+) as cofactor.

The protein resides in the cell membrane. The protein localises to the endoplasmic reticulum membrane. It localises to the golgi apparatus membrane. It is found in the late endosome. Its subcellular location is the cytoplasmic vesicle. The protein resides in the phagosome membrane. The protein localises to the phagosome. It localises to the cytoplasmic vesicle membrane. It is found in the melanosome. The enzyme catalyses GTP + H2O = GDP + phosphate + H(+). Its activity is regulated as follows. Regulated by guanine nucleotide exchange factors (GEFs) which promote the exchange of bound GDP for free GTP. Regulated by GTPase activating proteins (GAPs) which increase the GTP hydrolysis activity. Inhibited by GDP dissociation inhibitors (GDIs). Functionally, the small GTPases Rab are key regulators of intracellular membrane trafficking, from the formation of transport vesicles to their fusion with membranes. Rabs cycle between an inactive GDP-bound form and an active GTP-bound form that is able to recruit to membranes different sets of downstream effectors directly responsible for vesicle formation, movement, tethering and fusion. RAB9A is involved in the transport of proteins between the endosomes and the trans-Golgi network (TGN). Specifically uses NDE1/NDEL1 as an effector to interact with the dynein motor complex in order to control retrograde trafficking of RAB9-associated late endosomes to the TGN. Involved in the recruitment of SGSM2 to melanosomes and is required for the proper trafficking of melanogenic enzymes TYR, TYRP1 and DCT/TYRP2 to melanosomes in melanocytes. The chain is Ras-related protein Rab-9A from Homo sapiens (Human).